A 1166-amino-acid chain; its full sequence is ATP-dependent helicase/deoxyribonuclease subunit B (1166 aa).

The 285-residue stretch at 1-285 (MGAVFLSGRS…VRLEETKRHR (285 aa)) folds into the UvrD-like helicase ATP-binding domain. 8 to 15 (GRSGSGKT) serves as a coordination point for ATP. In terms of domain architecture, UvrD-like helicase C-terminal spans 279-586 (EETKRHRHHP…KFALIPPALD (308 aa)). Cys801, Cys1121, Cys1124, and Cys1130 together coordinate [4Fe-4S] cluster.

This sequence belongs to the helicase family. AddB/RexB type 1 subfamily. Heterodimer of AddA and AddB. The cofactor is Mg(2+). [4Fe-4S] cluster is required as a cofactor.

The heterodimer acts as both an ATP-dependent DNA helicase and an ATP-dependent, dual-direction single-stranded exonuclease. Recognizes the chi site generating a DNA molecule suitable for the initiation of homologous recombination. The AddB subunit has 5' -&gt; 3' nuclease activity but not helicase activity. The sequence is that of ATP-dependent helicase/deoxyribonuclease subunit B from Bacillus licheniformis (strain ATCC 14580 / DSM 13 / JCM 2505 / CCUG 7422 / NBRC 12200 / NCIMB 9375 / NCTC 10341 / NRRL NRS-1264 / Gibson 46).